A 64-amino-acid chain; its full sequence is Large ribosomal subunit protein bL35 (64 aa).

The segment covering 1–14 (MKQKTHKGTAKRVK) has biased composition (basic residues). A disordered region spans residues 1–50 (MKQKTHKGTAKRVKITGSGKLRREQANRRHLLEGKPSKRTRRLKGTEDVA). Residues 21–36 (LRREQANRRHLLEGKP) show a composition bias toward basic and acidic residues.

Belongs to the bacterial ribosomal protein bL35 family.

This chain is Large ribosomal subunit protein bL35, found in Corynebacterium diphtheriae (strain ATCC 700971 / NCTC 13129 / Biotype gravis).